The primary structure comprises 461 residues: Mannan endo-1,4-beta-mannosidase 4 (461 aa).

Trp-80 and Asn-195 together coordinate substrate. Residue Glu-196 is the Proton donor of the active site. Tyr-274 provides a ligand contact to substrate. Glu-314 functions as the Nucleophile in the catalytic mechanism. Substrate-binding residues include Trp-357 and Asp-364.

It belongs to the glycosyl hydrolase 5 (cellulase A) family. In terms of tissue distribution, ubiquitous.

It carries out the reaction Random hydrolysis of (1-&gt;4)-beta-D-mannosidic linkages in mannans, galactomannans and glucomannans.. The chain is Mannan endo-1,4-beta-mannosidase 4 (MAN4) from Oryza sativa subsp. japonica (Rice).